The primary structure comprises 334 residues: Type IV inositol polyphosphate 5-phosphatase 11 (334 aa).

Catalytic stretches follow at residues 206–222 and 282–297; these read DLTV…QDVS and KIRV…FKIQ.

It belongs to the inositol polyphosphate 5-phosphatase family. In terms of tissue distribution, expressed ubiquitously.

The protein localises to the cell membrane. It catalyses the reaction a 1,2-diacyl-sn-glycero-3-phospho-(1D-myo-inositol-4,5-bisphosphate) + H2O = a 1,2-diacyl-sn-glycero-3-phospho-(1D-myo-inositol 4-phosphate) + phosphate. The catalysed reaction is a 1,2-diacyl-sn-glycero-3-phospho-(1D-myo-inositol-3,4,5-trisphosphate) + H2O = a 1,2-diacyl-sn-glycero-3-phospho-(1D-myo-inositol-3,4-bisphosphate) + phosphate. Functionally, has phosphatase activity toward PtdIns(4,5)P2, and in vitro toward PtdIns(3,5)P2 and PtdIns(3,4,5)P3. Cannot dephosphorylate PtdIns(5)P, Ins(1,4,5)P3 and Ins(1,3,4,5)P4. The sequence is that of Type IV inositol polyphosphate 5-phosphatase 11 from Arabidopsis thaliana (Mouse-ear cress).